A 443-amino-acid polypeptide reads, in one-letter code: MKSSLSLCQRAANAASKYERYVPSCGVFPLGFKVGSIATGVKKNGQLDLGVILSTYEREGGATAAAVFTTNKFKAAPVVASKERLAKSEGRGISAIVVNSGCANAVTGAVGLENANKVVQLVEQQLGRKDTTLLMSTGVIGQHLSMDKIEHGLGTLLNNDDAFGNDFSSWLSLSKAMMTTDTFPKLISSRFTLPGGTTYTLTGISKGAGMICPNMATLLGFIGTDLPISPSALQNILSSAVDRSFNCISVDGDMSTNDTIYMLASGAIDTDLITESSESFPLIKAQVTELAQNLAQLVVRDGEGSTKFVTVHVKRALNFADAKVIAKTISNSSLVKCALYGQDANWGRILCAIGYAQLGDCASLDESTLNVSFVGVGDSKGAELNLVVDGVPNVNINESKAATMLADTDLKIVVDLGTGTEECNFWTCDLSHEYISINADYRS.

Substrate contacts are provided by Thr179, Lys206, Thr217, Glu303, Asn438, and Ser443. Residue Thr217 is the Nucleophile of the active site.

It belongs to the ArgJ family. As to quaternary structure, heterodimer of an alpha and a beta chain. In terms of processing, the alpha and beta chains are autoproteolytically processed from a single precursor protein within the mitochondrion.

Its subcellular location is the mitochondrion matrix. It carries out the reaction N(2)-acetyl-L-ornithine + L-glutamate = N-acetyl-L-glutamate + L-ornithine. It catalyses the reaction L-glutamate + acetyl-CoA = N-acetyl-L-glutamate + CoA + H(+). It functions in the pathway amino-acid biosynthesis; L-arginine biosynthesis; L-ornithine and N-acetyl-L-glutamate from L-glutamate and N(2)-acetyl-L-ornithine (cyclic): step 1/1. The protein operates within amino-acid biosynthesis; L-arginine biosynthesis; N(2)-acetyl-L-ornithine from L-glutamate: step 1/4. Its function is as follows. Catalyzes two activities which are involved in the cyclic version of arginine biosynthesis: the synthesis of acetylglutamate from glutamate and acetyl-CoA, and of ornithine by transacetylation between acetylornithine and glutamate. The chain is Arginine biosynthesis bifunctional protein ArgJ, mitochondrial from Eremothecium gossypii (strain ATCC 10895 / CBS 109.51 / FGSC 9923 / NRRL Y-1056) (Yeast).